The sequence spans 205 residues: Protein DEPP1 (205 aa).

Polar residues-rich tracts occupy residues 55–64 and 83–101; these read DKVTAQSRPN and GDSSLCVSSLQPTLPSPGT. Residues 55–171 are disordered; the sequence is DKVTAQSRPN…RHQTSDLKSW (117 aa). Basic and acidic residues predominate over residues 138–155; the sequence is MGKDTGRLCEARVPEHSL.

It is found in the cytoplasm. It localises to the peroxisome. Its subcellular location is the mitochondrion. Acts as a critical modulator of FOXO3-induced autophagy via increased cellular ROS. The chain is Protein DEPP1 (Depp1) from Mus musculus (Mouse).